Here is a 124-residue protein sequence, read N- to C-terminus: Small ribosomal subunit protein uS12 (124 aa).

At D89 the chain carries 3-methylthioaspartic acid.

This sequence belongs to the universal ribosomal protein uS12 family. In terms of assembly, part of the 30S ribosomal subunit. Contacts proteins S8 and S17. May interact with IF1 in the 30S initiation complex.

Functionally, with S4 and S5 plays an important role in translational accuracy. Interacts with and stabilizes bases of the 16S rRNA that are involved in tRNA selection in the A site and with the mRNA backbone. Located at the interface of the 30S and 50S subunits, it traverses the body of the 30S subunit contacting proteins on the other side and probably holding the rRNA structure together. The combined cluster of proteins S8, S12 and S17 appears to hold together the shoulder and platform of the 30S subunit. The polypeptide is Small ribosomal subunit protein uS12 (Edwardsiella ictaluri (strain 93-146)).